A 156-amino-acid chain; its full sequence is MPRKGPAPKREVLPDPIYNSKLVTRLINRLMLDGKRGKASKILYNAFDIIEKETGSEPTGVFEEAMNNIMPVLEVKARRVGGSNYQVPIEVRPDRRTTLGLRWLVNYARLRGEHTMPERLAREIMDAANNTGASVKKREDTHKMAEANRAFAHYRW.

Belongs to the universal ribosomal protein uS7 family. As to quaternary structure, part of the 30S ribosomal subunit. Contacts proteins S9 and S11.

Its function is as follows. One of the primary rRNA binding proteins, it binds directly to 16S rRNA where it nucleates assembly of the head domain of the 30S subunit. Is located at the subunit interface close to the decoding center, probably blocks exit of the E-site tRNA. This Pediococcus pentosaceus (strain ATCC 25745 / CCUG 21536 / LMG 10740 / 183-1w) protein is Small ribosomal subunit protein uS7.